Reading from the N-terminus, the 463-residue chain is Type IV secretion system protein PtlD (463 aa).

An N-terminal signal peptide occupies residues 1 to 24 (MAGLSRILLSCTLACLLAGQAAQA). The next 5 helical transmembrane spans lie at 118 to 138 (LQPL…YALL), 232 to 252 (WLLC…LAAS), 253 to 273 (LLIV…LFLV), 294 to 314 (ALVF…VLAG), and 333 to 353 (MLAA…VPLA). Positions 376 to 410 (AHRQAAARQYAPRPAAAAAAAGPHQAGTYAASATP) are enriched in low complexity. The interval 376–463 (AHRQAAARQY…RVLPRKPNLP (88 aa)) is disordered. Over residues 411 to 420 (APAPARPAPS) the composition is skewed to pro residues. Residues 441 to 455 (VRRDDRPAPAPDRRV) are compositionally biased toward basic and acidic residues.

The protein localises to the cell membrane. In terms of biological role, component of the type IV secretion system ptl required for secretion of assembled pertussis toxin (PTX) through the outer membrane. This is Type IV secretion system protein PtlD (ptlD) from Bordetella pertussis (strain Tohama I / ATCC BAA-589 / NCTC 13251).